The following is a 324-amino-acid chain: tRNA U34 carboxymethyltransferase (324 aa).

Carboxy-S-adenosyl-L-methionine contacts are provided by residues lysine 92, tryptophan 106, lysine 111, glycine 131, 153–155 (DPT), 181–182 (IE), methionine 197, tyrosine 201, and arginine 316.

The protein belongs to the class I-like SAM-binding methyltransferase superfamily. CmoB family. In terms of assembly, homotetramer.

It catalyses the reaction carboxy-S-adenosyl-L-methionine + 5-hydroxyuridine(34) in tRNA = 5-carboxymethoxyuridine(34) in tRNA + S-adenosyl-L-homocysteine + H(+). Functionally, catalyzes carboxymethyl transfer from carboxy-S-adenosyl-L-methionine (Cx-SAM) to 5-hydroxyuridine (ho5U) to form 5-carboxymethoxyuridine (cmo5U) at position 34 in tRNAs. In Methylococcus capsulatus (strain ATCC 33009 / NCIMB 11132 / Bath), this protein is tRNA U34 carboxymethyltransferase.